Consider the following 200-residue polypeptide: GTP-binding protein ypt2 (200 aa).

Gly16 to Ser23 contacts GTP. Positions Phe38–Phe46 match the Effector region motif. GTP-binding positions include Asp64 to Gln68 and Asn122 to Asp125. S-geranylgeranyl cysteine attachment occurs at residues Cys199 and Cys200.

Belongs to the small GTPase superfamily. Rab family.

It localises to the cell membrane. Its function is as follows. Protein transport. Probably involved in vesicular traffic. The polypeptide is GTP-binding protein ypt2 (ypt2) (Schizosaccharomyces pombe (strain 972 / ATCC 24843) (Fission yeast)).